Consider the following 162-residue polypeptide: Transcription elongation factor GreA (162 aa).

Positions 1–28 (MQKEPMLEETYRKLSEELEQLKSVERGV) form a coiled coil.

The protein belongs to the GreA/GreB family.

Necessary for efficient RNA polymerase transcription elongation past template-encoded arresting sites. The arresting sites in DNA have the property of trapping a certain fraction of elongating RNA polymerases that pass through, resulting in locked ternary complexes. Cleavage of the nascent transcript by cleavage factors such as GreA or GreB allows the resumption of elongation from the new 3'terminus. GreA releases sequences of 2 to 3 nucleotides. In Sulfurovum sp. (strain NBC37-1), this protein is Transcription elongation factor GreA.